The sequence spans 381 residues: Queuine tRNA-ribosyltransferase (381 aa).

Asp-103 functions as the Proton acceptor in the catalytic mechanism. Substrate contacts are provided by residues 103–107 (DSGGF), Asp-157, Gln-200, and Gly-227. An RNA binding region spans residues 258 to 264 (GVGTYRE). Residue Asp-277 is the Nucleophile of the active site. The interval 282–286 (TRLAR) is RNA binding; important for wobble base 34 recognition. Positions 315, 317, 320, and 346 each coordinate Zn(2+).

This sequence belongs to the queuine tRNA-ribosyltransferase family. In terms of assembly, homodimer. Within each dimer, one monomer is responsible for RNA recognition and catalysis, while the other monomer binds to the replacement base PreQ1. Zn(2+) serves as cofactor.

It catalyses the reaction 7-aminomethyl-7-carbaguanine + guanosine(34) in tRNA = 7-aminomethyl-7-carbaguanosine(34) in tRNA + guanine. The protein operates within tRNA modification; tRNA-queuosine biosynthesis. Catalyzes the base-exchange of a guanine (G) residue with the queuine precursor 7-aminomethyl-7-deazaguanine (PreQ1) at position 34 (anticodon wobble position) in tRNAs with GU(N) anticodons (tRNA-Asp, -Asn, -His and -Tyr). Catalysis occurs through a double-displacement mechanism. The nucleophile active site attacks the C1' of nucleotide 34 to detach the guanine base from the RNA, forming a covalent enzyme-RNA intermediate. The proton acceptor active site deprotonates the incoming PreQ1, allowing a nucleophilic attack on the C1' of the ribose to form the product. After dissociation, two additional enzymatic reactions on the tRNA convert PreQ1 to queuine (Q), resulting in the hypermodified nucleoside queuosine (7-(((4,5-cis-dihydroxy-2-cyclopenten-1-yl)amino)methyl)-7-deazaguanosine). The polypeptide is Queuine tRNA-ribosyltransferase (Cyanothece sp. (strain PCC 7425 / ATCC 29141)).